We begin with the raw amino-acid sequence, 372 residues long: 2-aminoethylphosphonate--pyruvate transaminase 2 (372 aa).

The residue at position 192 (Lys-192) is an N6-(pyridoxal phosphate)lysine.

This sequence belongs to the class-V pyridoxal-phosphate-dependent aminotransferase family. PhnW subfamily. Homodimer. The cofactor is pyridoxal 5'-phosphate.

The enzyme catalyses (2-aminoethyl)phosphonate + pyruvate = phosphonoacetaldehyde + L-alanine. Its function is as follows. Involved in phosphonate degradation. This Polaromonas sp. (strain JS666 / ATCC BAA-500) protein is 2-aminoethylphosphonate--pyruvate transaminase 2.